A 177-amino-acid polypeptide reads, in one-letter code: MSELTTIARPYAKAAFEFAVEHKAVDQWLGMLGFAAQVAENETIHNLVNGSVAAEELASIFVGICGEQLDEHGQNLIRVMAENGRLGVLPAVVAEFVAFKAELDKEVQADVISAIELTDQQKANIQASLEQRLARKVKLNCSMDASLMAGVLIKAGDLVIDGTVRGKLDRMADALQS.

This sequence belongs to the ATPase delta chain family. F-type ATPases have 2 components, F(1) - the catalytic core - and F(0) - the membrane proton channel. F(1) has five subunits: alpha(3), beta(3), gamma(1), delta(1), epsilon(1). F(0) has three main subunits: a(1), b(2) and c(10-14). The alpha and beta chains form an alternating ring which encloses part of the gamma chain. F(1) is attached to F(0) by a central stalk formed by the gamma and epsilon chains, while a peripheral stalk is formed by the delta and b chains.

Its subcellular location is the cell inner membrane. Its function is as follows. F(1)F(0) ATP synthase produces ATP from ADP in the presence of a proton or sodium gradient. F-type ATPases consist of two structural domains, F(1) containing the extramembraneous catalytic core and F(0) containing the membrane proton channel, linked together by a central stalk and a peripheral stalk. During catalysis, ATP synthesis in the catalytic domain of F(1) is coupled via a rotary mechanism of the central stalk subunits to proton translocation. Functionally, this protein is part of the stalk that links CF(0) to CF(1). It either transmits conformational changes from CF(0) to CF(1) or is implicated in proton conduction. The chain is ATP synthase subunit delta from Aeromonas hydrophila subsp. hydrophila (strain ATCC 7966 / DSM 30187 / BCRC 13018 / CCUG 14551 / JCM 1027 / KCTC 2358 / NCIMB 9240 / NCTC 8049).